We begin with the raw amino-acid sequence, 120 residues long: Anti-adapter protein IraM (120 aa).

It belongs to the IraM/RssC family.

It is found in the cytoplasm. Its function is as follows. Involved in the stabilization of the sigma stress factor RpoS. The polypeptide is Anti-adapter protein IraM (Salmonella typhimurium (strain LT2 / SGSC1412 / ATCC 700720)).